A 335-amino-acid polypeptide reads, in one-letter code: Mitochondrial thiamine diphosphate carrier 1 (335 aa).

6 helical membrane-spanning segments follow: residues 13–29 (KRAV…GAIS), 88–105 (VPAL…FAVL), 127–150 (YLSY…FDLL), 182–199 (LYAG…YAGL), 231–247 (SLSS…SGTV), and 304–323 (GIVP…FVAY). Solcar repeat units follow at residues 13–111 (KRAV…VKSF), 124–210 (LSPY…FKRW), and 232–329 (LSSF…ASDW).

Belongs to the mitochondrial carrier (TC 2.A.29) family.

It is found in the mitochondrion inner membrane. Functionally, mitochondrial transporter that mediates uptake of thiamine diphosphate (ThDP) into mitochondria. The chain is Mitochondrial thiamine diphosphate carrier 1 from Arabidopsis thaliana (Mouse-ear cress).